The following is a 57-amino-acid chain: Large ribosomal subunit protein bL32 (57 aa).

Belongs to the bacterial ribosomal protein bL32 family.

The chain is Large ribosomal subunit protein bL32 from Streptomyces griseus subsp. griseus (strain JCM 4626 / CBS 651.72 / NBRC 13350 / KCC S-0626 / ISP 5235).